A 366-amino-acid polypeptide reads, in one-letter code: N-acetyl-6-hydroxytryptophan oxidase ivoB (366 aa).

An N-terminal signal peptide occupies residues 1–18 (MHLLSSLAALAAAITVAF). 2 N-linked (GlcNAc...) asparagine glycosylation sites follow: Asn28 and Asn81. Cu cation is bound by residues His87 and His96. N-linked (GlcNAc...) asparagine glycans are attached at residues Asn114 and Asn121. His291 provides a ligand contact to Cu cation. Asn319 carries an N-linked (GlcNAc...) asparagine glycan.

This sequence belongs to the tyrosinase family. The cofactor is Cu(2+).

The protein operates within pigment biosynthesis. Activity is inhibited by 2,3-dihydroxynaphthalene, phenylhydrazine, diethyl dithiocarbamate and 8-hydroxyquinolene. In terms of biological role, nonribosomal peptide synthetase; part of the pathway that mediates the biosynthesis of the gray-brown conidiophore pigment. The first step of the pathway is performed by the nonribosomal peptide synthetase ivoA that catalyzes ATP-dependent unidirectional stereoinversion of L-tryptophan to D-tryptophan with complete conversion. While the stereoinversion is catalyzed by the epimerization (E) domain of ivoA, the terminal condensation (C) domain stereoselectively hydrolyzes D-tryptophanyl-S-phosphopantetheine thioester and thus represents a non-canonical C domain function. D-tryptophan is acetylated, probably by an endogenous acetyltransferase. N-acetyltryptophan is further 6-hydroxylated into N-acetyl-6-hydroxytryptophan (AHT) by the cytochrome P450 monooxygenase ivoC. N-acetyl-6-hydroxytryptophan is substrate of the N-acetyl-6-hydroxytryptophan oxidase ivoB to produce the gray-brown conidiophore pigment. The sequence is that of N-acetyl-6-hydroxytryptophan oxidase ivoB from Emericella nidulans (strain FGSC A4 / ATCC 38163 / CBS 112.46 / NRRL 194 / M139) (Aspergillus nidulans).